The primary structure comprises 348 residues: Nicotinate-nucleotide--dimethylbenzimidazole phosphoribosyltransferase (348 aa).

Residue glutamate 316 is the Proton acceptor of the active site.

It belongs to the CobT family.

The catalysed reaction is 5,6-dimethylbenzimidazole + nicotinate beta-D-ribonucleotide = alpha-ribazole 5'-phosphate + nicotinate + H(+). It functions in the pathway nucleoside biosynthesis; alpha-ribazole biosynthesis; alpha-ribazole from 5,6-dimethylbenzimidazole: step 1/2. In terms of biological role, catalyzes the synthesis of alpha-ribazole-5'-phosphate from nicotinate mononucleotide (NAMN) and 5,6-dimethylbenzimidazole (DMB). In Xanthomonas axonopodis pv. citri (strain 306), this protein is Nicotinate-nucleotide--dimethylbenzimidazole phosphoribosyltransferase.